The chain runs to 79 residues: Hematopoietic cell signal transducer (79 aa).

The N-terminal stretch at 1-18 is a signal peptide; the sequence is MAPPGGILFLLLLPVAAA. The Extracellular portion of the chain corresponds to 19-35; that stretch reads QVTSGSCSGCGPLSLPL. A helical transmembrane segment spans residues 36-56; sequence LAGLVAADAVVSLLIVVGVFV. Topologically, residues 57-79 are cytoplasmic; the sequence is CGRPRSRPTQEDGKIYINMPGRG. Tyr-72 is subject to Phosphotyrosine. The GRB2 binding site stretch occupies residues 72–74; the sequence is YIN. A PIK3R1 binding site region spans residues 72–75; sequence YINM.

This sequence belongs to the DAP10 family. In terms of assembly, homodimer; Disulfide-linked. Heterohexamer composed of four subunits of HCST/DAP10 and two subunits of KLRK1. Interacts (via transmembrane domain) with KLRK1 (via transmembrane domain); the interaction is required for KLRK1 NK cell surface and induces NK cell-mediated cytotoxicity. Interacts with PIK3R1 and GRB2. Interacts with CLEC5A. Forms an CLEC5A/TYROBP/HCST trimolecular complex depending almost solely on TYROBP. Interacts with KLRK1. Interacts with CD300H. Post-translationally, phosphorylated; PIK3R1 and GRB2 associate specifically with tyrosine-phosphorylated HCST. O-glycosylated. In terms of tissue distribution, expressed predominantly in lymphohematopoietic tissues.

The protein localises to the membrane. In terms of biological role, transmembrane adapter protein which associates with KLRK1 to form an activation receptor KLRK1-HCST in lymphoid and myeloid cells; this receptor plays a major role in triggering cytotoxicity against target cells expressing cell surface ligands such as MHC class I chain-related MICA and MICB, and UL16-binding proteins (ULBPs); these ligands are up-regulated by stress conditions and pathological state such as viral infection and tumor transformation. Functions as a docking site for PI3-kinase PIK3R1 and GRB2. Interaction of ULBPs with KLRK1-HCST triggers calcium mobilization and activation of the PIK3R1, MAP2K/ERK, and JAK2/STAT5 signaling pathways. Both PIK3R1 and GRB2 are required for full KLRK1-HCST-mediated activation and ultimate killing of target cells. In NK cells, KLRK1-HCST signaling directly induces cytotoxicity and enhances cytokine production initiated via DAP12/TYROBP-associated receptors. In T-cells, it provides primarily costimulation for TCR-induced signals. KLRK1-HCST receptor plays a role in immune surveillance against tumors and is required for cytolysis of tumors cells; indeed, melanoma cells that do not express KLRK1 ligands escape from immune surveillance mediated by NK cells. The protein is Hematopoietic cell signal transducer (HCST) of Sus scrofa (Pig).